The sequence spans 142 residues: Deoxyuridine 5'-triphosphate nucleotidohydrolase (142 aa).

Residues 62–64 (RSG), Asn-75, and 79–81 (TID) contribute to the substrate site.

This sequence belongs to the dUTPase family. Requires Mg(2+) as cofactor.

The catalysed reaction is dUTP + H2O = dUMP + diphosphate + H(+). It participates in pyrimidine metabolism; dUMP biosynthesis; dUMP from dCTP (dUTP route): step 2/2. In terms of biological role, this enzyme is involved in nucleotide metabolism: it produces dUMP, the immediate precursor of thymidine nucleotides and it decreases the intracellular concentration of dUTP so that uracil cannot be incorporated into DNA. The sequence is that of Deoxyuridine 5'-triphosphate nucleotidohydrolase from Crocosphaera subtropica (strain ATCC 51142 / BH68) (Cyanothece sp. (strain ATCC 51142)).